The sequence spans 289 residues: GTPase Era (289 aa).

The 166-residue stretch at Lys2 to Glu167 folds into the Era-type G domain. The interval Gly10 to Ser17 is G1. Residue Gly10 to Ser17 participates in GTP binding. The interval Asn36–Arg40 is G2. The segment at Asp57 to Gly60 is G3. GTP-binding positions include Asp57 to Leu61 and Thr116 to Asp119. A G4 region spans residues Thr116–Asp119. The segment at Leu146–Val148 is G5. One can recognise a KH type-2 domain in the interval Val198–Lys274.

Belongs to the TRAFAC class TrmE-Era-EngA-EngB-Septin-like GTPase superfamily. Era GTPase family. Monomer.

It localises to the cytoplasm. The protein resides in the cell inner membrane. An essential GTPase that binds both GDP and GTP, with rapid nucleotide exchange. Plays a role in 16S rRNA processing and 30S ribosomal subunit biogenesis and possibly also in cell cycle regulation and energy metabolism. This chain is GTPase Era, found in Campylobacter fetus subsp. fetus (strain 82-40).